We begin with the raw amino-acid sequence, 251 residues long: Putative mediator of RNA polymerase II transcription subunit 18 (251 aa).

Belongs to the Mediator complex subunit 18 family. As to quaternary structure, component of the Mediator complex.

It localises to the nucleus. In terms of biological role, component of the Mediator complex, a coactivator involved in the regulated transcription of nearly all RNA polymerase II-dependent genes. Mediator functions as a bridge to convey information from gene-specific regulatory proteins to the basal RNA polymerase II transcription machinery. Mediator is recruited to promoters by direct interactions with regulatory proteins and serves as a scaffold for the assembly of a functional preinitiation complex with RNA polymerase II and the general transcription factors. The protein is Putative mediator of RNA polymerase II transcription subunit 18 (med18) of Dictyostelium discoideum (Social amoeba).